Here is a 142-residue protein sequence, read N- to C-terminus: Holo-[acyl-carrier-protein] synthase (142 aa).

Residues aspartate 8 and glutamate 57 each contribute to the Mg(2+) site.

The protein belongs to the P-Pant transferase superfamily. AcpS family. The cofactor is Mg(2+).

It is found in the cytoplasm. It carries out the reaction apo-[ACP] + CoA = holo-[ACP] + adenosine 3',5'-bisphosphate + H(+). In terms of biological role, transfers the 4'-phosphopantetheine moiety from coenzyme A to a Ser of acyl-carrier-protein. In Maricaulis maris (strain MCS10) (Caulobacter maris), this protein is Holo-[acyl-carrier-protein] synthase.